A 430-amino-acid chain; its full sequence is Tyrosine--tRNA ligase (430 aa).

An L-tyrosine-binding site is contributed by tyrosine 32. The 'HIGH' region signature appears at 37 to 46 (PTADSLHIGH). The L-tyrosine site is built by tyrosine 172 and glutamine 176. Positions 232 to 236 (KFGKT) match the 'KMSKS' region motif. An ATP-binding site is contributed by lysine 235. The region spanning 362 to 429 (VKAVDLFVDN…GKKNYFLLIA (68 aa)) is the S4 RNA-binding domain.

This sequence belongs to the class-I aminoacyl-tRNA synthetase family. TyrS type 1 subfamily. Homodimer.

It localises to the cytoplasm. The catalysed reaction is tRNA(Tyr) + L-tyrosine + ATP = L-tyrosyl-tRNA(Tyr) + AMP + diphosphate + H(+). Catalyzes the attachment of tyrosine to tRNA(Tyr) in a two-step reaction: tyrosine is first activated by ATP to form Tyr-AMP and then transferred to the acceptor end of tRNA(Tyr). The sequence is that of Tyrosine--tRNA ligase from Bacteroides thetaiotaomicron (strain ATCC 29148 / DSM 2079 / JCM 5827 / CCUG 10774 / NCTC 10582 / VPI-5482 / E50).